Here is a 319-residue protein sequence, read N- to C-terminus: Annexin A5 (319 aa).

Position 2 is an N-acetylalanine (A2). 4 Annexin repeats span residues 13–84 (FDGR…ALMK), 85–156 (PSRL…VLLQ), 168–240 (AQVE…AVVK), and 244–315 (SIPA…LLCG). K27 participates in a covalent cross-link: Glycyl lysine isopeptide (Lys-Gly) (interchain with G-Cter in SUMO1); alternate. Residue K27 forms a Glycyl lysine isopeptide (Lys-Gly) (interchain with G-Cter in SUMO2); alternate linkage. S35 carries the phosphoserine modification. Residues K68, K74, K77, K95, and K99 each carry the N6-acetyllysine modification. An N6-succinyllysine modification is found at K288. A [IL]-x-C-x-x-[DE] motif motif is present at residues 312 to 318 (LLCGGED).

The protein belongs to the annexin family. Monomer. Binds ATRX, EIF5B and DNMT1. Post-translationally, S-nitrosylation is induced by interferon-gamma and oxidatively-modified low-densitity lipoprotein (LDL(ox)) possibly implicating the iNOS-S100A8/9 transnitrosylase complex.

In terms of biological role, this protein is an anticoagulant protein that acts as an indirect inhibitor of the thromboplastin-specific complex, which is involved in the blood coagulation cascade. The polypeptide is Annexin A5 (Anxa5) (Rattus norvegicus (Rat)).